Here is a 374-residue protein sequence, read N- to C-terminus: Lactoyl-CoA dehydratase subunit beta (374 aa).

This sequence belongs to the FldB/FldC dehydratase alpha/beta subunit family. In terms of assembly, heterodimer of an alpha (LcdA) and a beta (LcdB) subunit. It depends on [4Fe-4S] cluster as a cofactor. FMN is required as a cofactor. Riboflavin serves as cofactor. The cofactor is Mg(2+).

The catalysed reaction is (R)-lactoyl-CoA = acryloyl-CoA + H2O. It catalyses the reaction (2R)-hydroxybutanoyl-CoA = (2E)-butenoyl-CoA + H2O. Activated by the LcdC protein. In terms of biological role, involved in the acrylate pathway for the conversion of D-lactic acid to propionic acid. Catalyzes the reversible dehydration of Lactoyl-CoA and 2-hydroxybutyroyl-CoA to acryloyl-CoA and crotonyl-CoA, respectively. In Anaerotignum propionicum (Clostridium propionicum), this protein is Lactoyl-CoA dehydratase subunit beta (lcdB).